We begin with the raw amino-acid sequence, 157 residues long: SsrA-binding protein (157 aa).

Residues L133–G157 form a disordered region. Basic and acidic residues predominate over residues D135–R151.

This sequence belongs to the SmpB family.

It localises to the cytoplasm. In terms of biological role, required for rescue of stalled ribosomes mediated by trans-translation. Binds to transfer-messenger RNA (tmRNA), required for stable association of tmRNA with ribosomes. tmRNA and SmpB together mimic tRNA shape, replacing the anticodon stem-loop with SmpB. tmRNA is encoded by the ssrA gene; the 2 termini fold to resemble tRNA(Ala) and it encodes a 'tag peptide', a short internal open reading frame. During trans-translation Ala-aminoacylated tmRNA acts like a tRNA, entering the A-site of stalled ribosomes, displacing the stalled mRNA. The ribosome then switches to translate the ORF on the tmRNA; the nascent peptide is terminated with the 'tag peptide' encoded by the tmRNA and targeted for degradation. The ribosome is freed to recommence translation, which seems to be the essential function of trans-translation. The chain is SsrA-binding protein from Bradyrhizobium sp. (strain BTAi1 / ATCC BAA-1182).